A 170-amino-acid polypeptide reads, in one-letter code: Cathelicidin antimicrobial peptide (170 aa).

The N-terminal stretch at 1–30 (MNTQWDSPSLGRWSLVLLLLGLVMPLAIVA) is a signal peptide. Positions 31 to 131 (QVLSYQEAVL…DISCDKDKRK (101 aa)) are cleaved as a propeptide — cathelin-like domain (CLD). Intrachain disulfides connect Cys86–Cys97 and Cys108–Cys125. The interval 150-162 (LKNIGQRIKDFFG) is active core.

Belongs to the cathelicidin family. As to quaternary structure, monomer, homodimer or homotrimer (in vitro). Oligomerizes as tetra- or hexamer in solution (in vitro). Post-translationally, proteolytically cleaved by proteinase PRTN3 into antibacterial peptide LL-37. Proteolytically cleaved by cathepsin CTSG and neutrophil elastase ELANE. In terms of processing, resistant to proteolytic degradation in solution, and when bound to both zwitterionic (mimicking mammalian membranes) and negatively charged membranes (mimicking bacterial membranes). After secretion onto the skin surface, the CAMP gene product is processed by a serine protease-dependent mechanism into multiple novel antimicrobial peptides distinct from and shorter than cathelicidin LL-37. These peptides show enhanced antimicrobial action, acquiring the ability to kill skin pathogens such as S.aureus, E.coli and C.albicans. These peptides have lost the ability to stimulate CXCL8/IL8 release from keratinocytes. The peptides act synergistically, killing bacteria at lower concentrations when present together, and maintain activity at increased salt condition.

The protein localises to the secreted. It is found in the vesicle. Antimicrobial protein that is an integral component of the innate immune system. Binds to bacterial lipopolysaccharides (LPS). Acts via neutrophil N-formyl peptide receptors to enhance the release of CXCL2. Postsecretory processing generates multiple cathelicidin antimicrobial peptides with various lengths which act as a topical antimicrobial defense in sweat on skin. The unprocessed precursor form, cathelicidin antimicrobial peptide, inhibits the growth of Gram-negative E.coli and E.aerogenes with efficiencies comparable to that of the mature peptide LL-37 (in vitro). Functionally, antimicrobial peptide that is an integral component of the innate immune system. Binds to bacterial lipopolysaccharides (LPS). Causes membrane permeabilization by forming transmembrane pores (in vitro). Causes lysis of E.coli. Exhibits antimicrobial activity against Gram-negative bacteria such as P.aeruginosa, S.typhimurium, E.aerogenes, E.coli and P.syringae, Gram-positive bacteria such as L.monocytogenes, S.epidermidis, S.pyogenes and S.aureus, as well as vancomycin-resistant enterococci (in vitro). Exhibits antimicrobial activity against methicillin-resistant S.aureus, P.mirabilis, and C.albicans in low-salt media, but not in media containing 100 mM NaCl (in vitro). Forms chiral supramolecular assemblies with quinolone signal (PQS) molecules of P.aeruginosa, which may lead to interference of bacterial quorum signaling and perturbance of bacterial biofilm formation. May form supramolecular fiber-like assemblies on bacterial membranes. Induces cytokine and chemokine producation as well as TNF/TNFA and CSF2/GMCSF production in normal human keratinocytes. Exhibits hemolytic activity against red blood cells. In terms of biological role, exhibits antimicrobial activity against E.coli and B.megaterium (in vitro). The sequence is that of Cathelicidin antimicrobial peptide from Ateles fusciceps (Brown-headed spider monkey).